The primary structure comprises 1885 residues: Fatty acid synthase subunit alpha (1885 aa).

Over residues 92–107 (PDPADLAPKETPKQEE) the composition is skewed to basic and acidic residues. The segment at 92-140 (PDPADLAPKETPKQEESTPSAPAAATPTPAAAAAPTPAPAPASAGPVES) is disordered. Residues 108 to 126 (STPSAPAAATPTPAAAAAP) show a composition bias toward low complexity. Residues 146–221 (VKANLLIHVL…EQFQDSFSGQ (76 aa)) form the Carrier domain. O-(pantetheine 4'-phosphoryl)serine is present on Ser181. Positions 1121-1661 (IQEIVVQHDL…QKGAQAVVVH (541 aa)) constitute a Ketosynthase family 3 (KS3) domain. Active-site for beta-ketoacyl synthase activity residues include Cys1304, His1546, and His1587. Mg(2+) contacts are provided by Asp1771, Val1772, and Glu1773. Residues 1771-1773 (DVE), Tyr1797, Ser1807, 1816-1826 (EAVFKALGVES), 1840-1843 (RDVN), and 1870-1872 (ISH) contribute to the acetyl-CoA site. 2 residues coordinate Mg(2+): Ser1871 and His1872.

It belongs to the thiolase-like superfamily. Fungal fatty acid synthetase subunit alpha family. As to quaternary structure, [Alpha(6)beta(6)] hexamers of two multifunctional subunits (alpha and beta).

The catalysed reaction is acetyl-CoA + n malonyl-CoA + 2n NADPH + 4n H(+) = a long-chain-acyl-CoA + n CoA + n CO2 + 2n NADP(+).. The enzyme catalyses a fatty acyl-[ACP] + malonyl-[ACP] + H(+) = a 3-oxoacyl-[ACP] + holo-[ACP] + CO2. It carries out the reaction a (3R)-hydroxyacyl-[ACP] + NADP(+) = a 3-oxoacyl-[ACP] + NADPH + H(+). In terms of biological role, fatty acid synthetase catalyzes the formation of long-chain fatty acids from acetyl-CoA, malonyl-CoA and NADPH. The alpha subunit contains domains for: acyl carrier protein, 3-oxoacyl-[acyl-carrier-protein] reductase, and 3-oxoacyl-[acyl-carrier-protein] synthase. This chain is Fatty acid synthase subunit alpha (FAS2), found in Candida albicans (Yeast).